A 198-amino-acid polypeptide reads, in one-letter code: Holliday junction resolvase RecU (198 aa).

The segment at 1–22 (MVNYPHKLSSQKRQTSLSQPKN) is disordered. The segment covering 11–22 (QKRQTSLSQPKN) has biased composition (polar residues). Mg(2+) is bound by residues Thr-81, Asp-83, Glu-96, and Gln-115.

The protein belongs to the RecU family. Requires Mg(2+) as cofactor.

The protein localises to the cytoplasm. The catalysed reaction is Endonucleolytic cleavage at a junction such as a reciprocal single-stranded crossover between two homologous DNA duplexes (Holliday junction).. Functionally, endonuclease that resolves Holliday junction intermediates in genetic recombination. Cleaves mobile four-strand junctions by introducing symmetrical nicks in paired strands. Promotes annealing of linear ssDNA with homologous dsDNA. Required for DNA repair, homologous recombination and chromosome segregation. The polypeptide is Holliday junction resolvase RecU (Streptococcus pneumoniae (strain Hungary19A-6)).